A 468-amino-acid polypeptide reads, in one-letter code: Argininosuccinate lyase (468 aa).

Belongs to the lyase 1 family. Argininosuccinate lyase subfamily.

It localises to the cytoplasm. It catalyses the reaction 2-(N(omega)-L-arginino)succinate = fumarate + L-arginine. Its pathway is amino-acid biosynthesis; L-arginine biosynthesis; L-arginine from L-ornithine and carbamoyl phosphate: step 3/3. This is Argininosuccinate lyase from Gloeobacter violaceus (strain ATCC 29082 / PCC 7421).